Reading from the N-terminus, the 390-residue chain is Glutamate 5-kinase (390 aa).

Lys-29 lines the ATP pocket. Positions 69, 156, and 168 each coordinate substrate. 188–189 (TD) contacts ATP. One can recognise a PUA domain in the interval 295–374 (SGSLIVDAGA…EQFDRILGNN (80 aa)).

The protein belongs to the glutamate 5-kinase family.

It is found in the cytoplasm. The catalysed reaction is L-glutamate + ATP = L-glutamyl 5-phosphate + ADP. It participates in amino-acid biosynthesis; L-proline biosynthesis; L-glutamate 5-semialdehyde from L-glutamate: step 1/2. Catalyzes the transfer of a phosphate group to glutamate to form L-glutamate 5-phosphate. This is Glutamate 5-kinase from Psychrobacter arcticus (strain DSM 17307 / VKM B-2377 / 273-4).